Here is a 529-residue protein sequence, read N- to C-terminus: MGCVFCKKLEPVATAKEDAGLEGDFRSYGAADHYGPDPTKARPASSFAHIPNYSNFSSQAINPGFLDSGTIRGVSGIGVTLFIALYDYEARTEDDLTFTKGEKFHILNNTEGDWWEARSLSSGKTGCIPSNYVAPVDSIQAEEWYFGKIGRKDAERQLLSPGNPQGAFLIRESETTKGAYSLSIRDWDQTRGDHVKHYKIRKLDMGGYYITTRVQFNSVQELVQHYMEVNDGLCNLLIAPCTIMKPQTLGLAKDAWEISRSSITLERRLGTGCFGDVWLGTWNGSTKVAVKTLKPGTMSPKAFLEEAQVMKLLRHDKLVQLYAVVSEEPIYIVTEFMCHGSLLDFLKNPEGQDLRLPQLVDMAAQVAEGMAYMERMNYIHRDLRAANILVGERLACKIADFGLARLIKDDEYNPCQGSKFPIKWTAPEAALFGRFTIKSDVWSFGILLTELITKGRIPYPGMNKREVLEQVEQGYHMPCPPGCPASLYEAMEQTWRLDPEERPTFEYLQSFLEDYFTSAEPQYQPGDQT.

Gly2 carries the N-myristoyl glycine lipid modification. 2 S-palmitoyl cysteine lipidation sites follow: Cys3 and Cys6. Tyr34 is subject to Phosphotyrosine. The 62-residue stretch at 77 to 138 folds into the SH3 domain; it reads IGVTLFIALY…PSNYVAPVDS (62 aa). Residues 144–241 form the SH2 domain; that stretch reads WYFGKIGRKD…GLCNLLIAPC (98 aa). Tyr208 carries the phosphotyrosine modification. A Phosphoserine modification is found at Ser218. One can recognise a Protein kinase domain in the interval 263–516; the sequence is ITLERRLGTG…YLQSFLEDYF (254 aa). Residues 269 to 277 and Lys291 contribute to the ATP site; that span reads LGTGCFGDV. Asp382 (proton acceptor) is an active-site residue. Position 412 is a phosphotyrosine (Tyr412). At Tyr523 the chain carries Phosphotyrosine; by SRC.

It belongs to the protein kinase superfamily. Tyr protein kinase family. SRC subfamily. Interacts with ITGB1, ITGB2, MS4A2/FCER1B, FCER1G, FCGR2A and/or FCGR2B. Interacts (via SH2 domain) with SYK (tyrosine phosphorylated). Interacts (via SH2 domain) with FLT3 (tyrosine phosphorylated). Interacts with PTK2/FAK1. Interacts (via SH2 domain) with HCLS1 (tyrosine phosphorylated by SYK). Interacts with SIRPA and PTPNS1. Interacts (not phosphorylated on tyrosine residues) with CBL; FGR tyrosine phosphorylation promotes dissociation. Interacts with PIK3R1 and FASLG. Interacts with CLNK. Post-translationally, ubiquitinated. Becomes ubiquitinated in response to ITGB2 signaling; this does not lead to degradation. In terms of processing, phosphorylated. Autophosphorylated on tyrosine residues. Becomes phosphorylated in response to FCGR2A and/or FCGR2B engagement, cell adhesion and signaling by ITGB2. Prior phosphorylation at Tyr-523 by SRC inhibits ulterior autophosphorylation at Tyr-412. As to expression, detected in neutrophils, monocytes and natural killer cells (at protein level). Detected in monocytes and large lymphocytes.

The protein resides in the cell membrane. It is found in the cell projection. It localises to the ruffle membrane. The protein localises to the cytoplasm. Its subcellular location is the cytosol. The protein resides in the cytoskeleton. It is found in the mitochondrion inner membrane. It localises to the mitochondrion intermembrane space. It carries out the reaction L-tyrosyl-[protein] + ATP = O-phospho-L-tyrosyl-[protein] + ADP + H(+). Its activity is regulated as follows. Activated by autophosphorylation. Prior phosphorylation at Tyr-523 by SRC inhibits ulterior autophosphorylation at Tyr-412. Activated by phorbol myristate acetate, phosphatidic acid and poly-Lys. Binding (via SH2 domain) of HCLS1 that is already phosphorylated by SYK strongly increases kinase activity. Its function is as follows. Non-receptor tyrosine-protein kinase that transmits signals from cell surface receptors devoid of kinase activity and contributes to the regulation of immune responses, including neutrophil, monocyte, macrophage and mast cell functions, cytoskeleton remodeling in response to extracellular stimuli, phagocytosis, cell adhesion and migration. Promotes mast cell degranulation, release of inflammatory cytokines and IgE-mediated anaphylaxis. Acts downstream of receptors that bind the Fc region of immunoglobulins, such as MS4A2/FCER1B, FCGR2A and/or FCGR2B. Acts downstream of ITGB1 and ITGB2, and regulates actin cytoskeleton reorganization, cell spreading and adhesion. Depending on the context, activates or inhibits cellular responses. Functions as a negative regulator of ITGB2 signaling, phagocytosis and SYK activity in monocytes. Required for normal ITGB1 and ITGB2 signaling, normal cell spreading and adhesion in neutrophils and macrophages. Functions as a positive regulator of cell migration and regulates cytoskeleton reorganization via RAC1 activation. Phosphorylates SYK (in vitro) and promotes SYK-dependent activation of AKT1 and MAP kinase signaling. Phosphorylates PLD2 in antigen-stimulated mast cells, leading to PLD2 activation and the production of the signaling molecules lysophosphatidic acid and diacylglycerol. Promotes activation of PIK3R1. Phosphorylates FASLG, and thereby regulates its ubiquitination and subsequent internalization. Phosphorylates ABL1. Promotes phosphorylation of CBL, CTTN, PIK3R1, PTK2/FAK1, PTK2B/PYK2 and VAV2. Phosphorylates HCLS1 that has already been phosphorylated by SYK, but not unphosphorylated HCLS1. Together with CLNK, it acts as a negative regulator of natural killer cell-activating receptors and inhibits interferon-gamma production. The chain is Tyrosine-protein kinase Fgr (FGR) from Homo sapiens (Human).